Reading from the N-terminus, the 453-residue chain is Na(+)/H(+) antiporter NhaA 2 (453 aa).

Helical transmembrane passes span 32 to 52, 71 to 91, 109 to 129, 140 to 160, 169 to 189, 193 to 213, 232 to 252, 284 to 304, 310 to 330, 356 to 376, and 382 to 402; these read GALLLAGAVIALIWANSPGAA, LSLAAWAKDGLLAVFFFVAGL, AVPIAAAVGGVLAPAAVYVLI, GWAIPAATDIAFALAVLAVIG, VFLLTLAVVDDLIAIMIIAVF, NLSVTPLLATALPLVAFAILL, ALVHASGVHATVAGVLLALVV, AVPVFALMSAGVAIGGLGGLV, PVAIGVIAGLVIGKPLGVIAV, MLAGIGFTVSLLIGELSFAAG, and HVKIAIVTGSLIAAVLAAVIL. The disordered stretch occupies residues 409 to 453; it reads GSRGNDATTRDPDQTRVGTATQRTTPDHPTPAATDANQPARSPAP.

Belongs to the NhaA Na(+)/H(+) (TC 2.A.33) antiporter family.

The protein resides in the cell membrane. It carries out the reaction Na(+)(in) + 2 H(+)(out) = Na(+)(out) + 2 H(+)(in). Na(+)/H(+) antiporter that extrudes sodium in exchange for external protons. This chain is Na(+)/H(+) antiporter NhaA 2, found in Salinispora tropica (strain ATCC BAA-916 / DSM 44818 / JCM 13857 / NBRC 105044 / CNB-440).